A 612-amino-acid chain; its full sequence is Sulfite reductase [NADPH] hemoprotein beta-component (612 aa).

Residues 1-26 (MDDHKPIETPDGPAVDTPGIGARRYE) are disordered. Positions 469, 475, 514, and 518 each coordinate [4Fe-4S] cluster. Residue cysteine 518 coordinates siroheme.

Belongs to the nitrite and sulfite reductase 4Fe-4S domain family. Alpha(8)-beta(8). The alpha component is a flavoprotein, the beta component is a hemoprotein. The cofactor is siroheme. It depends on [4Fe-4S] cluster as a cofactor.

The enzyme catalyses hydrogen sulfide + 3 NADP(+) + 3 H2O = sulfite + 3 NADPH + 4 H(+). The protein operates within sulfur metabolism; hydrogen sulfide biosynthesis; hydrogen sulfide from sulfite (NADPH route): step 1/1. Functionally, component of the sulfite reductase complex that catalyzes the 6-electron reduction of sulfite to sulfide. This is one of several activities required for the biosynthesis of L-cysteine from sulfate. The polypeptide is Sulfite reductase [NADPH] hemoprotein beta-component (Methylorubrum extorquens (strain CM4 / NCIMB 13688) (Methylobacterium extorquens)).